A 145-amino-acid polypeptide reads, in one-letter code: uncharacterized protein (145 aa).

A helical membrane pass occupies residues 1 to 21 (MWFLVKATFWFSLVLVLLPFL). The tract at residues 109-145 (TPAESVPSAEATEKAEPAFKRMPVPEHRLDPGPASGK) is disordered. Residues 119-138 (ATEKAEPAFKRMPVPEHRLD) show a composition bias toward basic and acidic residues.

The protein resides in the membrane. This is an uncharacterized protein from Rhizobium meliloti (strain 1021) (Ensifer meliloti).